The primary structure comprises 1486 residues: Glutamate synthase [NADPH] large chain (1486 aa).

The propeptide occupies 1–11 (MLYDKSLERDN). The active-site Nucleophile is the Cys12. In terms of domain architecture, Glutamine amidotransferase type-2 spans 12 to 402 (CGFGLIAHIE…PGELMVIDTR (391 aa)). FMN is bound at residue 1049 to 1101 (LVETQQALVANGLRHKIRLQVDGGLKTGVDIIKAAILGAESFGFGTGPMVALG). Cys1102, Cys1108, and Cys1113 together coordinate [3Fe-4S] cluster.

Belongs to the glutamate synthase family. As to quaternary structure, aggregate of 4 catalytic active heterodimers, consisting of a large and a small subunit. Requires [3Fe-4S] cluster as cofactor. FAD serves as cofactor. It depends on FMN as a cofactor.

The enzyme catalyses 2 L-glutamate + NADP(+) = L-glutamine + 2-oxoglutarate + NADPH + H(+). It functions in the pathway amino-acid biosynthesis; L-glutamate biosynthesis via GLT pathway; L-glutamate from 2-oxoglutarate and L-glutamine (NADP(+) route): step 1/1. The protein operates within energy metabolism; nitrogen metabolism. Catalyzes the conversion of L-glutamine and 2-oxoglutarate into two molecules of L-glutamate. The polypeptide is Glutamate synthase [NADPH] large chain (gltB) (Escherichia coli (strain K12)).